Reading from the N-terminus, the 52-residue chain is uncharacterized protein (52 aa).

2 helical membrane-spanning segments follow: residues isoleucine 4–glutamate 24 and methionine 25–valine 45.

It localises to the cell membrane. This is an uncharacterized protein from Bacillus subtilis (strain 168).